Here is a 159-residue protein sequence, read N- to C-terminus: ATP synthase subunit b 2 (159 aa).

A helical membrane pass occupies residues 1 to 21 (MDATFWALVALIIFVGILLYM).

It belongs to the ATPase B chain family. F-type ATPases have 2 components, F(1) - the catalytic core - and F(0) - the membrane proton channel. F(1) has five subunits: alpha(3), beta(3), gamma(1), delta(1), epsilon(1). F(0) has three main subunits: a(1), b(2) and c(10-14). The alpha and beta chains form an alternating ring which encloses part of the gamma chain. F(1) is attached to F(0) by a central stalk formed by the gamma and epsilon chains, while a peripheral stalk is formed by the delta and b chains.

It localises to the cell inner membrane. Functionally, f(1)F(0) ATP synthase produces ATP from ADP in the presence of a proton or sodium gradient. F-type ATPases consist of two structural domains, F(1) containing the extramembraneous catalytic core and F(0) containing the membrane proton channel, linked together by a central stalk and a peripheral stalk. During catalysis, ATP synthesis in the catalytic domain of F(1) is coupled via a rotary mechanism of the central stalk subunits to proton translocation. Its function is as follows. Component of the F(0) channel, it forms part of the peripheral stalk, linking F(1) to F(0). This is ATP synthase subunit b 2 from Chelativorans sp. (strain BNC1).